We begin with the raw amino-acid sequence, 440 residues long: Inner membrane metabolite transport protein YhjE (440 aa).

Residues 1 to 34 (MQATATTLDHEQEYTPINSRNKVLVASLIGTAIE) lie on the Cytoplasmic side of the membrane. Residues 35–55 (FFDFYIYATAAVIVFPHIFFP) form a helical membrane-spanning segment. The Periplasmic portion of the chain corresponds to 56-66 (QGDPTAATLQS). The chain crosses the membrane as a helical span at residues 67–87 (LATFAIAFVARPIGSAVFGHF). At 88 to 108 (GDRVGRKATLVASLLTMGIST) the chain is on the cytoplasmic side. 2 consecutive transmembrane segments (helical) span residues 109–129 (VVIGLLPGYATIGIFAPLLLA) and 130–150 (LARFGQGLGLGGEWGGAALLA). At 151-167 (TENAPPRKRALYGSFPQ) the chain is on the cytoplasmic side. A helical transmembrane segment spans residues 168–188 (LGAPIGFFFANGTFLLLSWLL). Over 189–192 (TDEQ) the chain is Periplasmic. The helical transmembrane segment at 193 to 213 (FMSWGWRVPFIFSAVLVIIGL) threads the bilayer. Topologically, residues 214–248 (YVRVSLHESPVFEKVAKAKKQVKIPLGTLLTKHVR) are cytoplasmic. The helical transmembrane segment at 249 to 269 (VTVLGTFIMLATYTLFYIMTV) threads the bilayer. At 270-289 (YSMTFSTAAAPVGLGLPRNE) the chain is on the periplasmic side. Residues 290 to 310 (VLWMLMMAVIGFGVMVPVAGL) traverse the membrane as a helical segment. Residues 311-320 (LADAFGRRKS) lie on the Cytoplasmic side of the membrane. The chain crosses the membrane as a helical span at residues 321 to 341 (MVIITTLIILFALFAFNPLLG). At 342-345 (SGNP) the chain is on the periplasmic side. A helical membrane pass occupies residues 346 to 366 (ILVFAFLLLGLSLMGLTFGPM). Topologically, residues 367–384 (GALLPELFPTEVRYTGAS) are cytoplasmic. A helical transmembrane segment spans residues 385–405 (FSYNVASILGASVAPYIAAWL). Over 406–410 (QTNYG) the chain is Periplasmic. The helical transmembrane segment at 411–431 (LGAVGLYLAAMAGLTLIALLL) threads the bilayer. The Cytoplasmic segment spans residues 432-440 (THETRHQSL).

Belongs to the major facilitator superfamily. Metabolite:H+ Symporter (MHS) family (TC 2.A.1.6) family.

Its subcellular location is the cell inner membrane. This chain is Inner membrane metabolite transport protein YhjE (yhjE), found in Escherichia coli (strain K12).